The sequence spans 776 residues: Protein SEY1 (776 aa).

The Cytoplasmic segment spans residues 1-681 (MADRSAIQLI…KRSIITTRTH (681 aa)). Residues 34–263 (GLDYHVISVF…TENYYFKPQY (230 aa)) form the GB1/RHD3-type G domain. 44–51 (GSQSSGKS) lines the GTP pocket. The helical transmembrane segment at 682 to 702 (IPPWIYVLLAVLGWNEFVAVI) threads the bilayer. The Lumenal segment spans residues 703–705 (RNP). The chain crosses the membrane as a helical span at residues 706-726 (LFVTLTLILGATFFVIHKFGL). Topologically, residues 727-776 (WGPVVNVVQSAVGETRTAIKDKLRQFVVEDHEVKESFEMKDFSKNEQKEK) are cytoplasmic.

The protein belongs to the TRAFAC class dynamin-like GTPase superfamily. GB1/RHD3 GTPase family. RHD3 subfamily. Interacts with RTN1 and YOP1; GTP binding is not required for these interactions.

The protein localises to the endoplasmic reticulum membrane. Functionally, cooperates with the reticulon proteins RTN1 and RTN2 and the tubule-shaping DP1 family protein YOP1 to generate and maintain the structure of the tubular endoplasmic reticulum network. Has GTPase activity, which is required for its function in ER organization. This Saccharomyces cerevisiae (strain YJM789) (Baker's yeast) protein is Protein SEY1.